Consider the following 88-residue polypeptide: Phosphocarrier protein HPr (88 aa).

The HPr domain maps to 1–88 (MAQKTFTVTA…DTMSKEGLGE (88 aa)). Position 12 is a phosphoserine (S12). H15 acts as the Pros-phosphohistidine intermediate in catalysis. S46 carries the post-translational modification Phosphoserine; by HPrK/P.

Belongs to the HPr family.

It is found in the cytoplasm. With respect to regulation, phosphorylation on Ser-46 inhibits the phosphoryl transfer from enzyme I to HPr. Its function is as follows. General (non sugar-specific) component of the phosphoenolpyruvate-dependent sugar phosphotransferase system (sugar PTS). This major carbohydrate active-transport system catalyzes the phosphorylation of incoming sugar substrates concomitantly with their translocation across the cell membrane. The phosphoryl group from phosphoenolpyruvate (PEP) is transferred to the phosphoryl carrier protein HPr by enzyme I. Phospho-HPr then transfers it to the PTS EIIA domain. In terms of biological role, P-Ser-HPr interacts with the catabolite control protein A (CcpA), forming a complex that binds to DNA at the catabolite response elements cre, operator sites preceding a large number of catabolite-regulated genes. Thus, P-Ser-HPr is a corepressor in carbon catabolite repression (CCR), a mechanism that allows bacteria to coordinate and optimize the utilization of available carbon sources. P-Ser-HPr also plays a role in inducer exclusion, in which it probably interacts with several non-PTS permeases and inhibits their transport activity. This chain is Phosphocarrier protein HPr (ptsH), found in Priestia megaterium (Bacillus megaterium).